Consider the following 444-residue polypeptide: Light-independent protochlorophyllide reductase subunit N (444 aa).

[4Fe-4S] cluster-binding residues include C36, C61, and C118.

It belongs to the BchN/ChlN family. In terms of assembly, protochlorophyllide reductase is composed of three subunits; BchL, BchN and BchB. Forms a heterotetramer of two BchB and two BchN subunits. It depends on [4Fe-4S] cluster as a cofactor.

The catalysed reaction is chlorophyllide a + oxidized 2[4Fe-4S]-[ferredoxin] + 2 ADP + 2 phosphate = protochlorophyllide a + reduced 2[4Fe-4S]-[ferredoxin] + 2 ATP + 2 H2O. The protein operates within porphyrin-containing compound metabolism; bacteriochlorophyll biosynthesis (light-independent). Functionally, component of the dark-operative protochlorophyllide reductase (DPOR) that uses Mg-ATP and reduced ferredoxin to reduce ring D of protochlorophyllide (Pchlide) to form chlorophyllide a (Chlide). This reaction is light-independent. The NB-protein (BchN-BchB) is the catalytic component of the complex. The sequence is that of Light-independent protochlorophyllide reductase subunit N from Chloroflexus aurantiacus (strain ATCC 29366 / DSM 635 / J-10-fl).